The chain runs to 216 residues: Elongation factor Ts (216 aa).

The tract at residues 81–84 (TDFV) is involved in Mg(2+) ion dislocation from EF-Tu.

The protein belongs to the EF-Ts family.

It is found in the cytoplasm. Its function is as follows. Associates with the EF-Tu.GDP complex and induces the exchange of GDP to GTP. It remains bound to the aminoacyl-tRNA.EF-Tu.GTP complex up to the GTP hydrolysis stage on the ribosome. The chain is Elongation factor Ts from Geotalea daltonii (strain DSM 22248 / JCM 15807 / FRC-32) (Geobacter daltonii).